A 214-amino-acid polypeptide reads, in one-letter code: Uracil phosphoribosyltransferase (214 aa).

5-phospho-alpha-D-ribose 1-diphosphate is bound by residues R81, R106, and 133-141; that span reads DPMLATGNS. Uracil-binding positions include I196 and 201-203; that span reads GDA. D202 provides a ligand contact to 5-phospho-alpha-D-ribose 1-diphosphate.

Belongs to the UPRTase family. Mg(2+) is required as a cofactor.

It catalyses the reaction UMP + diphosphate = 5-phospho-alpha-D-ribose 1-diphosphate + uracil. It functions in the pathway pyrimidine metabolism; UMP biosynthesis via salvage pathway; UMP from uracil: step 1/1. Allosterically activated by GTP. Catalyzes the conversion of uracil and 5-phospho-alpha-D-ribose 1-diphosphate (PRPP) to UMP and diphosphate. This chain is Uracil phosphoribosyltransferase, found in Legionella pneumophila (strain Paris).